Here is a 431-residue protein sequence, read N- to C-terminus: MSKIVKVIGREIIDSRGNPTVEAEVHLEGGFVGLAAAPSGASTGSREALELRDGDKSRFLGKGVLKAVAAVNGPIAQAVIGKDAKDQANIDKIMIDLDGTENKSQFGANAILAVSLAAAKAAAASKGMPLYEHIAELNGTPGKFSMPLPMMNIINGGEHADNNVDIQEFMIQPVGAKTLKEAVRIGSEVFHTLAKVLKAKGMSTAVGDEGGYAPNLGSNAEALAVIAEAVKQAGYELGKDVTLAMDCAASEFYKDGKYVLAGEGNKAFTSEEFTHFLEDLTKQYPIVSIEDGLDESDWAGFKYQTEVLGDKIQLVGDDLFVTNTKILKEGIEKGVANSILIKFNQIGSLTETLAAIKMAKDAGYTAVISHRSGETEDATIADLAVGTAAGQIKTGSMSRSDRVAKYNQLIRIEEALGDRAPFNGLKEVKGQ.

Q167 lines the (2R)-2-phosphoglycerate pocket. Catalysis depends on E209, which acts as the Proton donor. Positions 246, 290, and 317 each coordinate Mg(2+). K342, R371, S372, and K393 together coordinate (2R)-2-phosphoglycerate. The active-site Proton acceptor is the K342.

The protein belongs to the enolase family. Component of the RNA degradosome, a multiprotein complex involved in RNA processing and mRNA degradation. It depends on Mg(2+) as a cofactor.

The protein localises to the cytoplasm. The protein resides in the secreted. It is found in the cell surface. It carries out the reaction (2R)-2-phosphoglycerate = phosphoenolpyruvate + H2O. It functions in the pathway carbohydrate degradation; glycolysis; pyruvate from D-glyceraldehyde 3-phosphate: step 4/5. Its function is as follows. Catalyzes the reversible conversion of 2-phosphoglycerate (2-PG) into phosphoenolpyruvate (PEP). It is essential for the degradation of carbohydrates via glycolysis. The polypeptide is Enolase (Yersinia enterocolitica serotype O:8 / biotype 1B (strain NCTC 13174 / 8081)).